A 271-amino-acid polypeptide reads, in one-letter code: ATP synthase subunit a (271 aa).

The next 5 membrane-spanning stretches (helical) occupy residues Phe38 to Val58, Leu100 to Leu120, Asp146 to Ile166, Leu220 to Pro240, and Ala242 to Val262.

Belongs to the ATPase A chain family. F-type ATPases have 2 components, CF(1) - the catalytic core - and CF(0) - the membrane proton channel. CF(1) has five subunits: alpha(3), beta(3), gamma(1), delta(1), epsilon(1). CF(0) has three main subunits: a(1), b(2) and c(9-12). The alpha and beta chains form an alternating ring which encloses part of the gamma chain. CF(1) is attached to CF(0) by a central stalk formed by the gamma and epsilon chains, while a peripheral stalk is formed by the delta and b chains.

Its subcellular location is the cell inner membrane. In terms of biological role, key component of the proton channel; it plays a direct role in the translocation of protons across the membrane. The sequence is that of ATP synthase subunit a from Salmonella choleraesuis (strain SC-B67).